The following is a 462-amino-acid chain: BBSome complex member bbs-4 (462 aa).

Residues 1 to 46 are disordered; sequence MEASNQDEIIGTDVIPNEQDNPEEVVPEPTSLDVPPPPPERAPSAP. TPR repeat units follow at residues 89–122, 124–156, 199–232, 234–266, 268–300, 335–368, and 369–402; these read EAAF…SGKN, RYFY…MKDN, ATLI…QPDN, EVMN…DPAN, QAIL…SDYN, YKIS…YPQN, and AKAV…KKNP.

Belongs to the BBS4 family. As to quaternary structure, part of BBSome complex, that contains at least bbs-1, bbs-2, bbs-4, bbs-5, osm-12, bbs-8/ttc-8 and bbs-9. Interacts (via C-terminus) with bbs-5; the interaction is direct.

The protein resides in the cytoplasm. The protein localises to the cytoskeleton. Its subcellular location is the microtubule organizing center. It is found in the centrosome. It localises to the cell projection. The protein resides in the cilium membrane. Component of the BBSome complex. The BBSome complex is thought to function as a coat complex required for sorting of specific membrane proteins to the primary cilia. The BBSome complex is required for ciliogenesis but is dispensable for centriolar satellite function. Required for proper BBSome complex assembly and its ciliary localization. May be required for microtubule anchoring at the centrosome but not for microtubule nucleation. May be required for the dynein-mediated transport of pericentriolar proteins to the centrosome. Required, redundantly with bbs-5, for cilia biogenesis and both the assembly and movement of intraflagellar transport proteins along the ciliary axoneme. Plays a role in the removal of degraded mechanosensory receptors within the cilia. The chain is BBSome complex member bbs-4 from Caenorhabditis elegans.